Here is a 752-residue protein sequence, read N- to C-terminus: Double zinc ribbon and ankyrin repeat-containing protein 1 (752 aa).

2 consecutive DZANK-type zinc fingers follow at residues 210 to 270 and 338 to 386; these read CPKC…VVCE and CSKC…GGCG. The span at 448–469 shows a compositional bias: basic and acidic residues; it reads KKRSQQREAELSRQEQMRDRKP. Disordered regions lie at residues 448 to 471 and 536 to 614; these read KKRS…KPLL and PPEE…VGPE. The segment covering 536 to 554 has biased composition (low complexity); it reads PPEESRSSSAGQRSRSVTS. The span at 555–580 shows a compositional bias: polar residues; that stretch reads ESQNLSSVTEGRNSASPENNINTTGS. Residues 600–614 are compositionally biased toward basic and acidic residues; that stretch reads PESKDSLLLKEVGPE. ANK repeat units follow at residues 638 to 667, 672 to 703, and 707 to 737; these read DGRP…DVNQ, LKNT…SIRK, and RGQT…GLLL.

Its subcellular location is the cytoplasm. It is found in the cytoskeleton. The protein resides in the microtubule organizing center. The protein localises to the centrosome. It localises to the cilium basal body. In terms of biological role, required for the intracellular transport of organelles and vesicles, and is essential for the photoreceptor's outer segments formation, maintenance and function. This Danio rerio (Zebrafish) protein is Double zinc ribbon and ankyrin repeat-containing protein 1 (dzank1).